A 380-amino-acid polypeptide reads, in one-letter code: Cytochrome b (380 aa).

A run of 4 helical transmembrane segments spans residues 34–54, 78–99, 114–134, and 179–199; these read FGSL…LLAM, WLIR…FLHI, WNTG…GYVL, and FFAL…IHLT. Heme b-binding residues include H84 and H98. 2 residues coordinate heme b: H183 and H197. H202 provides a ligand contact to a ubiquinone. Transmembrane regions (helical) follow at residues 227-247, 289-309, 321-341, and 348-368; these read FKDI…ALFS, LGGV…PFLH, LSQT…WIGS, and FIII…ILFP.

This sequence belongs to the cytochrome b family. In terms of assembly, the cytochrome bc1 complex contains 11 subunits: 3 respiratory subunits (MT-CYB, CYC1 and UQCRFS1), 2 core proteins (UQCRC1 and UQCRC2) and 6 low-molecular weight proteins (UQCRH/QCR6, UQCRB/QCR7, UQCRQ/QCR8, UQCR10/QCR9, UQCR11/QCR10 and a cleavage product of UQCRFS1). This cytochrome bc1 complex then forms a dimer. Requires heme b as cofactor.

It localises to the mitochondrion inner membrane. Functionally, component of the ubiquinol-cytochrome c reductase complex (complex III or cytochrome b-c1 complex) that is part of the mitochondrial respiratory chain. The b-c1 complex mediates electron transfer from ubiquinol to cytochrome c. Contributes to the generation of a proton gradient across the mitochondrial membrane that is then used for ATP synthesis. The sequence is that of Cytochrome b (MT-CYB) from Gallus gallus (Chicken).